The sequence spans 373 residues: 3-dehydroquinate synthase (373 aa).

NAD(+) contacts are provided by residues aspartate 74–lysine 79, glycine 108–aspartate 112, threonine 132–threonine 133, lysine 145, lysine 154, and threonine 172–threonine 175. Zn(2+) is bound by residues glutamate 187, histidine 250, and histidine 266.

Belongs to the sugar phosphate cyclases superfamily. Dehydroquinate synthase family. Requires Co(2+) as cofactor. Zn(2+) is required as a cofactor. The cofactor is NAD(+).

The protein resides in the cytoplasm. It catalyses the reaction 7-phospho-2-dehydro-3-deoxy-D-arabino-heptonate = 3-dehydroquinate + phosphate. It participates in metabolic intermediate biosynthesis; chorismate biosynthesis; chorismate from D-erythrose 4-phosphate and phosphoenolpyruvate: step 2/7. Catalyzes the conversion of 3-deoxy-D-arabino-heptulosonate 7-phosphate (DAHP) to dehydroquinate (DHQ). In Nocardia farcinica (strain IFM 10152), this protein is 3-dehydroquinate synthase.